The primary structure comprises 467 residues: ATP-dependent protease ATPase subunit HslU (467 aa).

Residues Val22 and 64–69 (GVGKTE) contribute to the ATP site. The interval 149–192 (QTNNPLESLFGGAIPNFGQNNEDEEEPPTEEIKTKRSEIKRQLE) is disordered. The span at 178–192 (EEIKTKRSEIKRQLE) shows a compositional bias: basic and acidic residues. Positions 280, 345, and 417 each coordinate ATP.

The protein belongs to the ClpX chaperone family. HslU subfamily. As to quaternary structure, a double ring-shaped homohexamer of HslV is capped on each side by a ring-shaped HslU homohexamer. The assembly of the HslU/HslV complex is dependent on binding of ATP.

The protein localises to the cytoplasm. Functionally, ATPase subunit of a proteasome-like degradation complex; this subunit has chaperone activity. The binding of ATP and its subsequent hydrolysis by HslU are essential for unfolding of protein substrates subsequently hydrolyzed by HslV. HslU recognizes the N-terminal part of its protein substrates and unfolds these before they are guided to HslV for hydrolysis. The chain is ATP-dependent protease ATPase subunit HslU from Staphylococcus aureus (strain MW2).